Here is a 273-residue protein sequence, read N- to C-terminus: Small ribosomal subunit protein uS3 (273 aa).

Residues 40-110 enclose the KH type-2 domain; sequence IRNLFFVNYR…NLDLTINEIG (71 aa). The span at 244-265 shows a compositional bias: polar residues; sequence QVLSANKLTGSDVETSSIQALT. Residues 244–273 are disordered; it reads QVLSANKLTGSDVETSSIQALTKPNKEDKQ.

This sequence belongs to the universal ribosomal protein uS3 family. In terms of assembly, part of the 30S ribosomal subunit. Forms a tight complex with proteins S10 and S14.

Binds the lower part of the 30S subunit head. Binds mRNA in the 70S ribosome, positioning it for translation. In Mycoplasma pneumoniae (strain ATCC 29342 / M129 / Subtype 1) (Mycoplasmoides pneumoniae), this protein is Small ribosomal subunit protein uS3.